The sequence spans 152 residues: Deoxyuridine 5'-triphosphate nucleotidohydrolase (152 aa).

Substrate is bound by residues 71 to 73, Asn84, 88 to 90, and Met98; these read RSG and LID.

This sequence belongs to the dUTPase family. It depends on Mg(2+) as a cofactor.

It catalyses the reaction dUTP + H2O = dUMP + diphosphate + H(+). It functions in the pathway pyrimidine metabolism; dUMP biosynthesis; dUMP from dCTP (dUTP route): step 2/2. Functionally, this enzyme is involved in nucleotide metabolism: it produces dUMP, the immediate precursor of thymidine nucleotides and it decreases the intracellular concentration of dUTP so that uracil cannot be incorporated into DNA. The polypeptide is Deoxyuridine 5'-triphosphate nucleotidohydrolase (Photorhabdus laumondii subsp. laumondii (strain DSM 15139 / CIP 105565 / TT01) (Photorhabdus luminescens subsp. laumondii)).